The primary structure comprises 338 residues: MRVLGIETSCDETGIAVYDDKKGLLSHALYSQVKLHADYGGVVPELASRDHVRKIVPLIRQALADAGMTIEDIDGIAYTKGPGLIGALLVGACVGRALAFSWDKPAIGVHHMEGHLLAPMLEDDVPEFPFLALLVSGGHSMIVGVEGIGRYTVLGESVDDAAGEAFDKTAKLMGLDYPGGPRLSKLAAKGVPNSYRFPRPMTDKPGLNMSFSGLKTFAANTIAAEPKDEQTRANIACAFEEAVVDTLAIKCKRALKQTGYKNLVIAGGVSANTRLRSSLAEMMQGLGGKVYYPRGEFCTDNGAMIAYAGLQRLKAGQVEGLEVKGQPRWPLDTLEPVD.

Positions 111 and 115 each coordinate Fe cation. Substrate is bound by residues 134–138 (LVSGG), D167, G180, and N272. Residue D300 participates in Fe cation binding.

This sequence belongs to the KAE1 / TsaD family. It depends on Fe(2+) as a cofactor.

It localises to the cytoplasm. The catalysed reaction is L-threonylcarbamoyladenylate + adenosine(37) in tRNA = N(6)-L-threonylcarbamoyladenosine(37) in tRNA + AMP + H(+). Functionally, required for the formation of a threonylcarbamoyl group on adenosine at position 37 (t(6)A37) in tRNAs that read codons beginning with adenine. Is involved in the transfer of the threonylcarbamoyl moiety of threonylcarbamoyl-AMP (TC-AMP) to the N6 group of A37, together with TsaE and TsaB. TsaD likely plays a direct catalytic role in this reaction. The sequence is that of tRNA N6-adenosine threonylcarbamoyltransferase from Shewanella pealeana (strain ATCC 700345 / ANG-SQ1).